The primary structure comprises 511 residues: Coatomer subunit delta (511 aa).

The segment covering 168 to 177 (QARRDAERQG) has biased composition (basic and acidic residues). Positions 168–188 (QARRDAERQGKKAPGFGGFGS) are disordered. Ser223 is modified (phosphoserine). N6-acetyllysine is present on residues Lys233 and Lys241. Ser244 carries the post-translational modification Phosphoserine. In terms of domain architecture, MHD spans 271–511 (MESVHMKIEE…TFLVDKYEIL (241 aa)). 2 positions are modified to N6-acetyllysine: Lys309 and Lys351. Phosphoserine is present on Ser493.

This sequence belongs to the adaptor complexes medium subunit family. Delta-COP subfamily. Oligomeric complex that consists of at least the alpha, beta, beta', gamma, delta, epsilon and zeta subunits.

Its subcellular location is the cytoplasm. It is found in the golgi apparatus membrane. The protein resides in the cytoplasmic vesicle. The protein localises to the COPI-coated vesicle membrane. In terms of biological role, the coatomer is a cytosolic protein complex that binds to dilysine motifs and reversibly associates with Golgi non-clathrin-coated vesicles, which further mediate biosynthetic protein transport from the ER, via the Golgi up to the trans Golgi network. Coatomer complex is required for budding from Golgi membranes, and is essential for the retrograde Golgi-to-ER transport of dilysine-tagged proteins. In mammals, the coatomer can only be recruited by membranes associated to ADP-ribosylation factors (ARFs), which are small GTP-binding proteins; the complex also influences the Golgi structural integrity, as well as the processing, activity, and endocytic recycling of LDL receptors. In Mus musculus (Mouse), this protein is Coatomer subunit delta (Arcn1).